The sequence spans 434 residues: Calcium uptake protein 2, mitochondrial (434 aa).

The transit peptide at 1-22 (MAAAAGSCARVAAWGGKLRRGL) directs the protein to the mitochondrion. Residues 172-207 (KPHSGFHVAFKMLDTDGNEMIEKREFFKLQKIISKQ) enclose the EF-hand 1 domain. Residues Asp-185, Asp-187, Asn-189, Met-191, Glu-193, and Glu-196 each contribute to the Ca(2+) site. A Phosphoserine modification is found at Ser-205. The EF-hand 2; degenerate domain maps to 227 to 262 (EPEINTTLQMRFFGKRGQRKLHYKEFRRFMENLQTE). Residues 293–328 (TENKDIYWKNVREKLSAGESISLDEFKSFCHFTTHL) enclose the EF-hand 3; degenerate domain. The EF-hand 4 domain maps to 362–397 (LSNNILDTVFKIFDLDGDECLSHEEFLGVLKNRMHR). Asp-375, Asp-377, Asp-379, Cys-381, and Glu-386 together coordinate Ca(2+).

It belongs to the MICU1 family. MICU2 subfamily. As to quaternary structure, heterodimer; disulfide-linked; heterodimerizes with MICU1. Component of the uniplex complex, composed of MCU, EMRE/SMDT1, MICU1 and MICU2 in a 4:4:1:1 stoichiometry.

Its subcellular location is the mitochondrion intermembrane space. The protein resides in the mitochondrion inner membrane. In terms of biological role, calcium sensor of the mitochondrial calcium uniporter (MCU) channel, which senses calcium level via its EF-hand domains. MICU1 and MICU2 form a disulfide-linked heterodimer that stimulates and inhibits MCU activity, depending on the concentration of calcium. At low calcium levels, MICU1 occludes the pore of the MCU channel, preventing mitochondrial calcium uptake. At higher calcium levels, calcium-binding to MICU1 and MICU2 induces a conformational change that weakens MCU-MICU1 interactions and moves the MICU1-MICU2 heterodimer away from the pore, allowing calcium permeation through the MCU channel. The sequence is that of Calcium uptake protein 2, mitochondrial from Homo sapiens (Human).